A 262-amino-acid polypeptide reads, in one-letter code: Acyl-[acyl-carrier-protein]--UDP-N-acetylglucosamine O-acyltransferase (262 aa).

It belongs to the transferase hexapeptide repeat family. LpxA subfamily. Homotrimer.

Its subcellular location is the cytoplasm. It carries out the reaction a (3R)-hydroxyacyl-[ACP] + UDP-N-acetyl-alpha-D-glucosamine = a UDP-3-O-[(3R)-3-hydroxyacyl]-N-acetyl-alpha-D-glucosamine + holo-[ACP]. Its pathway is glycolipid biosynthesis; lipid IV(A) biosynthesis; lipid IV(A) from (3R)-3-hydroxytetradecanoyl-[acyl-carrier-protein] and UDP-N-acetyl-alpha-D-glucosamine: step 1/6. In terms of biological role, involved in the biosynthesis of lipid A, a phosphorylated glycolipid that anchors the lipopolysaccharide to the outer membrane of the cell. The polypeptide is Acyl-[acyl-carrier-protein]--UDP-N-acetylglucosamine O-acyltransferase (Shigella dysenteriae serotype 1 (strain Sd197)).